The primary structure comprises 263 residues: MIATSRAVNMNKESKHKKAVAKPCRERQTSVTRAMRPAVARDPRRLSTSSSPSSSPMSAQRRLSREEIINEMEKEQDAIVVRLLREIETLKEENSRLKNQLHHPVPARRSSPFFEGESAILDDDDCNYGYTLDTPKLKLTDGASRHTVLPLTPKDSMTHISHSARRSSRNASISNGTSISDTIFPIETKIHSAPTTNRNLPSADLPHHTLLPRSLSGISSSDLTESGALLHDRRRRSSNYSLDGSNSLKADLMAKRFQTGSLK.

Disordered stretches follow at residues 1–62 (MIAT…AQRR) and 149–176 (LPLTPKDSMTHISHSARRSSRNASISNG). The span at 46 to 61 (LSTSSSPSSSPMSAQR) shows a compositional bias: low complexity. A phosphoserine mark is found at serine 172, serine 192, serine 214, and serine 238.

Its subcellular location is the cytoplasm. The protein resides in the nucleus. Functionally, may be a component of a protein phosphatase type 2A (PP2A) complex. Negatively regulates SIT4 phosphatase, a modulators of caffeine sensitivity. This chain is Protein phosphatase type 2A regulatory subunit RTS3 (RTS3), found in Saccharomyces cerevisiae (strain ATCC 204508 / S288c) (Baker's yeast).